We begin with the raw amino-acid sequence, 274 residues long: 3-methyl-2-oxobutanoate hydroxymethyltransferase (274 aa).

D49 and D88 together coordinate Mg(2+). 3-methyl-2-oxobutanoate contacts are provided by residues D49 to S50, D88, and K118. A Mg(2+)-binding site is contributed by E120. Residue E187 is the Proton acceptor of the active site.

It belongs to the PanB family. In terms of assembly, homodecamer; pentamer of dimers. The cofactor is Mg(2+).

It localises to the cytoplasm. It catalyses the reaction 3-methyl-2-oxobutanoate + (6R)-5,10-methylene-5,6,7,8-tetrahydrofolate + H2O = 2-dehydropantoate + (6S)-5,6,7,8-tetrahydrofolate. It functions in the pathway cofactor biosynthesis; (R)-pantothenate biosynthesis; (R)-pantoate from 3-methyl-2-oxobutanoate: step 1/2. Its function is as follows. Catalyzes the reversible reaction in which hydroxymethyl group from 5,10-methylenetetrahydrofolate is transferred onto alpha-ketoisovalerate to form ketopantoate. The sequence is that of 3-methyl-2-oxobutanoate hydroxymethyltransferase from Parvibaculum lavamentivorans (strain DS-1 / DSM 13023 / NCIMB 13966).